The chain runs to 20 residues: Hemocyanin subunit 6 (20 aa).

The protein belongs to the tyrosinase family. Hemocyanin subfamily. Hemolymph.

Its subcellular location is the secreted. The protein localises to the extracellular space. Its function is as follows. Hemocyanins are copper-containing oxygen carriers occurring freely dissolved in the hemolymph of many mollusks and arthropods. The protein is Hemocyanin subunit 6 of Homarus americanus (American lobster).